Consider the following 80-residue polypeptide: MPQEIGDIKKFIEICRRKDASAARIKKNKATQQIKFKVRCQKYLYTLVLKDSDKAEKLKASLPPSLTIADVAKRNKKQTA.

The protein belongs to the eukaryotic ribosomal protein eL38 family. As to quaternary structure, component of the large ribosomal subunit (LSU). Mature N.crassa ribosomes consist of a small (40S) and a large (60S) subunit. The 40S small subunit contains 1 molecule of ribosomal RNA (18S rRNA) and at least 32 different proteins. The large 60S subunit contains 3 rRNA molecules (26S, 5.8S and 5S rRNA) and at least 42 different proteins.

The protein resides in the cytoplasm. In terms of biological role, component of the ribosome, a large ribonucleoprotein complex responsible for the synthesis of proteins in the cell. The small ribosomal subunit (SSU) binds messenger RNAs (mRNAs) and translates the encoded message by selecting cognate aminoacyl-transfer RNA (tRNA) molecules. The large subunit (LSU) contains the ribosomal catalytic site termed the peptidyl transferase center (PTC), which catalyzes the formation of peptide bonds, thereby polymerizing the amino acids delivered by tRNAs into a polypeptide chain. The nascent polypeptides leave the ribosome through a tunnel in the LSU and interact with protein factors that function in enzymatic processing, targeting, and the membrane insertion of nascent chains at the exit of the ribosomal tunnel. This chain is Large ribosomal subunit protein eL38 (rpl-38), found in Neurospora crassa (strain ATCC 24698 / 74-OR23-1A / CBS 708.71 / DSM 1257 / FGSC 987).